Here is a 149-residue protein sequence, read N- to C-terminus: Protein FAM72A (149 aa).

It belongs to the FAM72 family. As to quaternary structure, interacts with UNG. As to expression, expressed at high levels in stomach and also in kidney and, at low levels, in heart (at protein level). In the stomach, highly expressed in foveolar cells, parietal cells and chief cells (at protein level). In kidney, expressed in endothelial cells, mesangial and epithelial cells (parietal and visceral epithelium) around glomerulus (at protein level).

The protein localises to the cytoplasm. It localises to the mitochondrion. In terms of biological role, may play a role in the regulation of cellular reactive oxygen species metabolism. May participate in cell growth regulation. The protein is Protein FAM72A (FAM72A) of Bos taurus (Bovine).